A 372-amino-acid polypeptide reads, in one-letter code: Alanine dehydrogenase 1 (372 aa).

Histidine 94 is a catalytic residue. 170–200 is a binding site for NAD(+); sequence TYVIFGGGVAATNAANVALGLNAKVIIIELN.

The protein belongs to the AlaDH/PNT family.

It catalyses the reaction L-alanine + NAD(+) + H2O = pyruvate + NH4(+) + NADH + H(+). Its pathway is amino-acid degradation; L-alanine degradation via dehydrogenase pathway; NH(3) and pyruvate from L-alanine: step 1/1. Functionally, may play a role in cell wall synthesis as L-alanine is an important constituent of the peptidoglycan layer. This is Alanine dehydrogenase 1 (ald1) from Staphylococcus aureus (strain bovine RF122 / ET3-1).